Consider the following 183-residue polypeptide: Cyanate hydratase (183 aa).

Active-site residues include Arg-118, Glu-121, and Ser-144.

This sequence belongs to the cyanase family.

The enzyme catalyses cyanate + hydrogencarbonate + 3 H(+) = NH4(+) + 2 CO2. In terms of biological role, catalyzes the reaction of cyanate with bicarbonate to produce ammonia and carbon dioxide. The protein is Cyanate hydratase of Cryptococcus neoformans var. neoformans serotype D (strain B-3501A) (Filobasidiella neoformans).